We begin with the raw amino-acid sequence, 157 residues long: 2-C-methyl-D-erythritol 2,4-cyclodiphosphate synthase (157 aa).

The a divalent metal cation site is built by Asp-8 and His-10. 4-CDP-2-C-methyl-D-erythritol 2-phosphate is bound by residues 8–10 (DVH) and 34–35 (HS). His-42 contacts a divalent metal cation. Residues 56-58 (DIG), 61-65 (FPDTD), 132-135 (TTEE), and Phe-139 contribute to the 4-CDP-2-C-methyl-D-erythritol 2-phosphate site.

Belongs to the IspF family. As to quaternary structure, homotrimer. A divalent metal cation serves as cofactor.

It carries out the reaction 4-CDP-2-C-methyl-D-erythritol 2-phosphate = 2-C-methyl-D-erythritol 2,4-cyclic diphosphate + CMP. It functions in the pathway isoprenoid biosynthesis; isopentenyl diphosphate biosynthesis via DXP pathway; isopentenyl diphosphate from 1-deoxy-D-xylulose 5-phosphate: step 4/6. In terms of biological role, involved in the biosynthesis of isopentenyl diphosphate (IPP) and dimethylallyl diphosphate (DMAPP), two major building blocks of isoprenoid compounds. Catalyzes the conversion of 4-diphosphocytidyl-2-C-methyl-D-erythritol 2-phosphate (CDP-ME2P) to 2-C-methyl-D-erythritol 2,4-cyclodiphosphate (ME-CPP) with a corresponding release of cytidine 5-monophosphate (CMP). The protein is 2-C-methyl-D-erythritol 2,4-cyclodiphosphate synthase of Clostridium botulinum (strain Eklund 17B / Type B).